The sequence spans 239 residues: Probable transcriptional regulatory protein YeeI (239 aa).

Belongs to the TACO1 family. YeeN subfamily.

It is found in the cytoplasm. This is Probable transcriptional regulatory protein YeeI (yeeI) from Bacillus subtilis (strain 168).